A 348-amino-acid chain; its full sequence is Ketol-acid reductoisomerase (NADP(+)) (348 aa).

The 179-residue stretch at 1-179 (MDVHYDADPA…GGTHAGVIET (179 aa)) folds into the KARI N-terminal Rossmann domain. Residues 22–25 (YGSQ), Arg-45, Ser-48, Ser-50, and 80–83 (DQHQ) contribute to the NADP(+) site. Residue His-105 is part of the active site. Gly-131 lines the NADP(+) pocket. The region spanning 180 to 325 (TFKDETETDL…QTLRGMMPWL (146 aa)) is the KARI C-terminal knotted domain. The Mg(2+) site is built by Asp-188, Glu-192, Glu-224, and Glu-228. Ser-249 contributes to the substrate binding site. Positions 323–348 (PWLNGDETSADEDAPDAADTAPASSS) are disordered. The span at 339-348 (AADTAPASSS) shows a compositional bias: low complexity.

The protein belongs to the ketol-acid reductoisomerase family. The cofactor is Mg(2+).

The enzyme catalyses (2R)-2,3-dihydroxy-3-methylbutanoate + NADP(+) = (2S)-2-acetolactate + NADPH + H(+). The catalysed reaction is (2R,3R)-2,3-dihydroxy-3-methylpentanoate + NADP(+) = (S)-2-ethyl-2-hydroxy-3-oxobutanoate + NADPH + H(+). Its pathway is amino-acid biosynthesis; L-isoleucine biosynthesis; L-isoleucine from 2-oxobutanoate: step 2/4. It functions in the pathway amino-acid biosynthesis; L-valine biosynthesis; L-valine from pyruvate: step 2/4. Involved in the biosynthesis of branched-chain amino acids (BCAA). Catalyzes an alkyl-migration followed by a ketol-acid reduction of (S)-2-acetolactate (S2AL) to yield (R)-2,3-dihydroxy-isovalerate. In the isomerase reaction, S2AL is rearranged via a Mg-dependent methyl migration to produce 3-hydroxy-3-methyl-2-ketobutyrate (HMKB). In the reductase reaction, this 2-ketoacid undergoes a metal-dependent reduction by NADPH to yield (R)-2,3-dihydroxy-isovalerate. This chain is Ketol-acid reductoisomerase (NADP(+)), found in Salinibacter ruber (strain DSM 13855 / M31).